The chain runs to 462 residues: uncharacterized protein (462 aa).

The region spanning 12–70 (MLKKNDIIQVAISDLSHEGAGVAKHDGFVFFVDNALPEEVIDMRVLKVNKNSGFGKVEA) is the TRAM domain. S-adenosyl-L-methionine contacts are provided by Gln-294, Tyr-323, Glu-344, and Asp-392. Catalysis depends on Cys-419, which acts as the Nucleophile.

Belongs to the class I-like SAM-binding methyltransferase superfamily. RNA M5U methyltransferase family.

This is an uncharacterized protein from Streptococcus pyogenes serotype M18 (strain MGAS8232).